The chain runs to 280 residues: MNTTHVPEPHRTEQHAENQRHWRKILGIAPIVSIAFPATMYFISDEDSFEDSLFLRFITVLLPFSYSAVQYALLHTNWKSHNKPERILQSILYYTLNLLFLAFSIISILSIIAFTLAEWEDDDWENNNDPIIFSFILPSFTVPLTYLLSTSCCLVPGQIGFTDTGINVLVDILILLCSAGDLVPAFDEVKHCYYFAIISSILILIRLLREKLSPEKQSPPPTAPWRIAVFVLILISIVIAYALLAYLIMNADIFDNYSISFGKVERASFHQSPANKQLIS.

The protein belongs to the UPF0328 family.

The protein is UPF0328 protein ECU06_0020/ECU06_1700 of Encephalitozoon cuniculi (strain GB-M1) (Microsporidian parasite).